A 1683-amino-acid chain; its full sequence is ABC transporter 7 (1683 aa).

Residues Asp-24–Phe-44 form a helical membrane-spanning segment. The segment at Arg-53 to Asp-93 is disordered. Residues Ser-81–Asp-93 are compositionally biased toward acidic residues. 4 consecutive transmembrane segments (helical) span residues Leu-127–Leu-147, Thr-157–Leu-177, His-190–Phe-210, and Leu-221–Ile-241. An N-linked (GlcNAc...) asparagine glycan is attached at Asn-247. The next 2 helical transmembrane spans lie at Gly-336–Leu-356 and Ser-368–Asp-388. Positions Ala-338–Glu-664 constitute an ABC transmembrane type-1 1 domain. Residues Gly-451 to Gln-473 form a disordered region. Asn-489 carries an N-linked (GlcNAc...) asparagine glycan. Transmembrane regions (helical) follow at residues Tyr-496–Tyr-516 and Val-518–Ile-538. N-linked (GlcNAc...) asparagine glycosylation is present at Asn-545. The next 2 membrane-spanning stretches (helical) occupy residues Val-602–Phe-622 and Pro-632–Leu-648. Residues Ile-700–Lys-949 form the ABC transporter 1 domain. Gly-742–Thr-749 contributes to the ATP binding site. The segment at Ser-952–Glu-998 is disordered. N-linked (GlcNAc...) asparagine glycosylation occurs at Asn-956. The helical transmembrane segment at Leu-1016–Ser-1036 threads the bilayer. The 324-residue stretch at Val-1028–Ser-1351 folds into the ABC transmembrane type-1 2 domain. Asn-1097 is a glycosylation site (N-linked (GlcNAc...) asparagine). The next 3 membrane-spanning stretches (helical) occupy residues Ala-1111–Leu-1131, Val-1182–Val-1202, and Val-1204–Ala-1224. Residue Asn-1277 is glycosylated (N-linked (GlcNAc...) asparagine). 2 helical membrane-spanning segments follow: residues Leu-1304–Ile-1324 and Gly-1327–Val-1347. The region spanning Val-1392 to Cys-1649 is the ABC transporter 2 domain. N-linked (GlcNAc...) asparagine glycans are attached at residues Asn-1396 and Asn-1411. Gly-1426–Ser-1433 serves as a coordination point for ATP. 2 N-linked (GlcNAc...) asparagine glycosylation sites follow: Asn-1541 and Asn-1552.

Belongs to the ABC transporter superfamily.

The protein resides in the membrane. Its function is as follows. ABC transporter; part of the gene cluster that mediates the biosynthesis of pyriculol and pyriculariol, two heptaketides that induce lesion formation upon application on rice leaves but are dispensable for pathogenicity. With the MFS transporter MFS1, is most likely responsible for pyriculol and pyriculariol secretion and thereby may contribute to intrinsic resistance. The chain is ABC transporter 7 from Pyricularia oryzae (strain 70-15 / ATCC MYA-4617 / FGSC 8958) (Rice blast fungus).